The following is a 243-amino-acid chain: Ribonuclease 3 (243 aa).

Residues 15-144 (NDTISKIINY…LIGAIYIDGG (130 aa)) enclose the RNase III domain. Glutamate 57 contributes to the Mg(2+) binding site. Aspartate 61 is an active-site residue. Asparagine 130 and glutamate 133 together coordinate Mg(2+). The active site involves glutamate 133. A DRBM domain is found at 169–238 (DPKTSLQEWT…AELMLEKINN (70 aa)).

It belongs to the ribonuclease III family. Homodimer. Requires Mg(2+) as cofactor.

Its subcellular location is the cytoplasm. It carries out the reaction Endonucleolytic cleavage to 5'-phosphomonoester.. Functionally, digests double-stranded RNA. Involved in the processing of primary rRNA transcript to yield the immediate precursors to the large and small rRNAs (23S and 16S). Processes some mRNAs, and tRNAs when they are encoded in the rRNA operon. Processes pre-crRNA and tracrRNA of type II CRISPR loci if present in the organism. The protein is Ribonuclease 3 of Wolbachia sp. subsp. Brugia malayi (strain TRS).